An 858-amino-acid polypeptide reads, in one-letter code: Rho GTPase-activating protein 17 (858 aa).

The BAR domain maps to 14 to 246; that stretch reads QTVGRAEKTE…MRAHQDKWAE (233 aa). In terms of domain architecture, Rho-GAP spans 252–442; the sequence is TPLEEHLKRS…PIIQHADWFF (191 aa). A compositionally biased stretch (polar residues) spans 459-475; sequence TPNSNHSSHTGNDSDSG. The disordered stretch occupies residues 459-482; the sequence is TPNSNHSSHTGNDSDSGTLERKRP. Ser484 carries the post-translational modification Phosphoserine. Residues 516 to 823 are disordered; sequence RKHISPAFQP…VTDTNSRVSE (308 aa). The segment covering 543–552 has biased composition (polar residues); it reads PSQSSRADSN. The span at 553 to 563 shows a compositional bias: low complexity; that stretch reads SVGGPVPSSSG. A Phosphoserine modification is found at Ser575. A compositionally biased stretch (polar residues) spans 592-617; sequence RNSNQITTVPNQAQTGGNSHQLSVGT. Positions 637–650 are enriched in pro residues; that stretch reads APAPPKPGNPPPGH. The span at 653–702 shows a compositional bias: low complexity; it reads GQSSPGTGTSPKPSTRSPSPPQQQQQQQQQQQQQQQQQQQQQQQQQQQQQ. Phosphoserine is present on residues Ser710 and Ser712. Composition is skewed to pro residues over residues 716–729 and 738–756; these read IQAPNHPPPQPPTQ and EPGPTPPQTPTPPSTPPPA. Phosphothreonine occurs at positions 742, 746, and 748. The SH3-binding signature appears at 742-755; that stretch reads TPPQTPTPPSTPPP. Ser751 is modified (phosphoserine). Thr752 is modified (phosphothreonine). Residues 757–769 are compositionally biased toward polar residues; it reads KQNSSQSETTQLH. Positions 784–794 are enriched in pro residues; it reads RPSVPPPPNPP. Polar residues predominate over residues 806 to 823; the sequence is SVPTASRIVTDTNSRVSE.

Component of a complex whose core is composed of ARHGAP17, AMOT, PALS1, PATJ and PARD3/PAR3. Interacts with NHERF1, FNBP1, TRIP10, CAPZA (CAPZA1, CAPZA2 or CAPZA3), CAPZB, CD2AP and SH3KBP1/CIN85. As to expression, highly expressed in brain; neuron-specific (at protein level). Isoform 2, isoform 3 and isoform 4 are predominantly expressed in neuronal tissues and correlate well with the differentiation of neurons, while isoform 1 is strongly expressed in embryonic brain.

It is found in the membrane. It localises to the cytoplasm. The protein resides in the cell junction. The protein localises to the tight junction. In terms of biological role, rho GTPase-activating protein involved in the maintenance of tight junction by regulating the activity of CDC42, thereby playing a central role in apical polarity of epithelial cells. Specifically acts as a GTPase activator for the CDC42 GTPase by converting it to an inactive GDP-bound state. The complex formed with AMOT acts by regulating the uptake of polarity proteins at tight junctions, possibly by deciding whether tight junction transmembrane proteins are recycled back to the plasma membrane or sent elsewhere. Participates in the Ca(2+)-dependent regulation of exocytosis, possibly by catalyzing GTPase activity of Rho family proteins and by inducing the reorganization of the cortical actin filaments. Acts as a GTPase activator in vitro for RAC1. The sequence is that of Rho GTPase-activating protein 17 (Arhgap17) from Rattus norvegicus (Rat).